We begin with the raw amino-acid sequence, 296 residues long: MKNITFKEKINLSNYTTIKVGGFAEYFSKPNNTDEFINLINWASLNNQKCRIIGAGSNLLINNIFLKGLTICTKKMRSIKIESHSGIVEVEAGVMLPTMSNILAKKGLQGGEWTVGIPGTVGGSICMNAGSKQLSLANNLLSVRVIDTKTLKISEIEKKDINFQYRFSPFQQNNLMIISAKLLFEPKGNIEQLLETTQKNLKKKTDTQPYHLPSFGSVFKNPTNNYAGKLIEELGLKGFKIGGAEISTMHGNFIVNNSFANSKDILDLITVIQQKVLQKKGIFLEPEVRMIGFDYP.

The FAD-binding PCMH-type domain occupies 19–203 (KVGGFAEYFS…LETTQKNLKK (185 aa)). Arg166 is a catalytic residue. Ser217 acts as the Proton donor in catalysis. Residue Glu287 is part of the active site.

It belongs to the MurB family. It depends on FAD as a cofactor.

Its subcellular location is the cytoplasm. The enzyme catalyses UDP-N-acetyl-alpha-D-muramate + NADP(+) = UDP-N-acetyl-3-O-(1-carboxyvinyl)-alpha-D-glucosamine + NADPH + H(+). It functions in the pathway cell wall biogenesis; peptidoglycan biosynthesis. Functionally, cell wall formation. The sequence is that of UDP-N-acetylenolpyruvoylglucosamine reductase from Prochlorococcus marinus subsp. pastoris (strain CCMP1986 / NIES-2087 / MED4).